A 308-amino-acid polypeptide reads, in one-letter code: Olfactory receptor OR9H1 (308 aa).

At 1–26 (MVNFTHVSEFVLLGFQGGPGMQAMLF) the chain is on the extracellular side. Residues 27 to 47 (LIFLILYGIAVVGNLGMIVII) form a helical membrane-spanning segment. The Cytoplasmic portion of the chain corresponds to 48-58 (WVDAHLHTPMY). A helical transmembrane segment spans residues 59 to 81 (AFLQSLSLLDICYSSTIAPRALA). Residues 82 to 95 (NSMQEDHTISFGGC) are Extracellular-facing. A disulfide bridge connects residues Cys-95 and Cys-177. A helical membrane pass occupies residues 96 to 116 (AAQFFFLSLFGITEAFLLAAM). At 117-137 (AYDRFIAICNPLLYSVSMSHQ) the chain is on the cytoplasmic side. Residues 138–158 (VCVLLISGSYLWGVVNAIAQT) traverse the membrane as a helical segment. At 159–203 (TMTFRLPFCGSNEINDFFCDVPPLLSLSCSDTFINQLVLLGLCGS) the chain is on the extracellular side. The chain crosses the membrane as a helical span at residues 204–224 (IIVSTFLIVLVSYIYIISTIL). Topologically, residues 225–245 (RIPTMQGCQKAFSTCASHLTG) are cytoplasmic. Residues 246-266 (VCLFFGTVFFMYAQPSAIFFM) form a helical membrane-spanning segment. Over 267–269 (EQS) the chain is Extracellular. A helical membrane pass occupies residues 270-290 (KIVSIFYTMVIPMLNPLIYSL). The Cytoplasmic portion of the chain corresponds to 291-308 (RNKEVKQALRRSMQKLSL).

It belongs to the G-protein coupled receptor 1 family.

It localises to the cell membrane. Odorant receptor. This Homo sapiens (Human) protein is Olfactory receptor OR9H1.